A 385-amino-acid chain; its full sequence is 3-hydroxyisobutyryl-CoA hydrolase, mitochondrial (385 aa).

Substrate-binding residues include Glu120, Gly145, Glu168, and Asp176.

It belongs to the enoyl-CoA hydratase/isomerase family.

The protein localises to the mitochondrion. It carries out the reaction 3-hydroxy-2-methylpropanoyl-CoA + H2O = 3-hydroxy-2-methylpropanoate + CoA + H(+). It functions in the pathway amino-acid degradation; L-valine degradation. In terms of biological role, hydrolyzes 3-hydroxyisobutyryl-CoA (HIBYL-CoA), a saline catabolite. Has high activity toward isobutyryl-CoA. Could be an isobutyryl-CoA dehydrogenase that functions in valine catabolism. Also hydrolyzes 3-hydroxypropanoyl-CoA. The protein is 3-hydroxyisobutyryl-CoA hydrolase, mitochondrial (hibch) of Xenopus laevis (African clawed frog).